The following is a 354-amino-acid chain: Guanine nucleotide-binding protein G(t) subunit alpha-3 (354 aa).

The tract at residues 1–27 (MGSGISSESKESAKRSKELEKKLQEDA) is disordered. Residue glycine 2 is the site of N-myristoyl glycine attachment. The span at 8 to 27 (ESKESAKRSKELEKKLQEDA) shows a compositional bias: basic and acidic residues. Residues 32 to 354 (RTVKLLLLGA…KENLKDCGLF (323 aa)) form the G-alpha domain. Positions 35 to 48 (KLLLLGAGESGKST) are G1 motif. GTP-binding positions include 40 to 47 (GAGESGKS), 175 to 181 (LHSRVKT), 200 to 204 (DVGGQ), 269 to 272 (NKKD), and alanine 326. Residues serine 47 and threonine 181 each contribute to the Mg(2+) site. Positions 173 to 181 (DVLHSRVKT) are G2 motif. The interval 196-205 (FRMFDVGGQR) is G3 motif. Residues 265–272 (VLFLNKKD) are G4 motif. The G5 motif stretch occupies residues 324–329 (TCATDT).

This sequence belongs to the G-alpha family. G(i/o/t/z) subfamily. G proteins are composed of 3 units; alpha, beta and gamma, respectively GNAT3, GNB1 and GNG13 for Gustducin heterotrimer for bitter taste transduction. The alpha chain contains the guanine nucleotide binding site. Component of the TAS2R14-GNAT3 complex, consisting of TAS2R14, GNAT3, GNB1 and GNG2; within the complex interacts with TAS2R14; this complex plays a role in the perception of bitterness. Gustducin heterotrimer may also be composed of GNAT3, GNB3 and GNG13. Potential N-myristoylation may anchor alpha-subunit to the inner surface of plasma membrane. In terms of tissue distribution, expressed in taste buds (sensory organs of clustered epithelial cells) of the circumvallate and foliate papillae of the tongue at protein level. Expressed in enteroendocrine L cells of the gut. Detected also in spermatozoa.

Its subcellular location is the cytoplasm. In terms of biological role, guanine nucleotide-binding protein (G protein) alpha subunit playing a prominent role in bitter and sweet taste transduction as well as in umami (monosodium glutamate, monopotassium glutamate, and inosine monophosphate) taste transduction. Transduction by this alpha subunit involves coupling of specific cell-surface receptors with a cGMP-phosphodiesterase; Activation of phosphodiesterase lowers intracellular levels of cAMP and cGMP which may open a cyclic nucleotide-suppressible cation channel leading to influx of calcium, ultimately leading to release of neurotransmitter. Indeed, denatonium and strychnine induce transient reduction in cAMP and cGMP in taste tissue, whereas this decrease is inhibited by GNAT3 antibody. Gustducin heterotrimer transduces response to bitter and sweet compounds via regulation of phosphodiesterase for alpha subunit, as well as via activation of phospholipase C for beta and gamma subunits, with ultimate increase inositol trisphosphate and increase of intracellular Calcium. GNAT3 can functionally couple to taste receptors to transmit intracellular signal: receptor heterodimer TAS1R2/TAS1R3 senses sweetness and TAS1R1/TAS1R3 transduces umami taste, whereas the T2R family GPCRs such as TAS2R14 act as bitter sensors. Also functions as lumenal sugar sensors in the gut to control the expression of the Na+-glucose transporter SGLT1 in response to dietaty sugar, as well as the secretion of Glucagon-like peptide-1, GLP-1 and glucose-dependent insulinotropic polypeptide, GIP. Thus, may modulate the gut capacity to absorb sugars, with implications in malabsorption syndromes and diet-related disorders including diabetes and obesity. In Homo sapiens (Human), this protein is Guanine nucleotide-binding protein G(t) subunit alpha-3 (GNAT3).